Here is a 153-residue protein sequence, read N- to C-terminus: uncharacterized protein (153 aa).

A2 carries the post-translational modification N-acetylalanine.

This is an uncharacterized protein from Arabidopsis thaliana (Mouse-ear cress).